The sequence spans 130 residues: MARPARRTVRRSERKNVEKGIAHIHSTFNNTIVTITDPSGNAIAWASAGTCGFSGTKKGTPFAAQLAAEKAAKMAMDHGMRTVEVYVKGPGAGREAAIRALQAAGLEVTLIKDVTPIPHNGCRPPKRRRV.

This sequence belongs to the universal ribosomal protein uS11 family. As to quaternary structure, part of the 30S ribosomal subunit. Interacts with proteins S7 and S18. Binds to IF-3.

Located on the platform of the 30S subunit, it bridges several disparate RNA helices of the 16S rRNA. Forms part of the Shine-Dalgarno cleft in the 70S ribosome. The chain is Small ribosomal subunit protein uS11 from Caldicellulosiruptor bescii (strain ATCC BAA-1888 / DSM 6725 / KCTC 15123 / Z-1320) (Anaerocellum thermophilum).